Reading from the N-terminus, the 300-residue chain is Recombination-associated protein RdgC (300 aa).

The protein belongs to the RdgC family.

The protein resides in the cytoplasm. Its subcellular location is the nucleoid. May be involved in recombination. The sequence is that of Recombination-associated protein RdgC from Herminiimonas arsenicoxydans.